We begin with the raw amino-acid sequence, 201 residues long: Holliday junction branch migration complex subunit RuvA (201 aa).

Positions 1–64 (MIGRLYGKII…EDAHLLFGFA (64 aa)) are domain I. The interval 65 to 143 (QKQDRTLFRE…GIAQTDFFVE (79 aa)) is domain II. The tract at residues 144 to 154 (HSHETMVATYE) is flexible linker. A domain III region spans residues 154–201 (EIDASEEARDALLALGYKLTDAEKMIKKVHKSGATSEQLIRDALKASL).

It belongs to the RuvA family. Homotetramer. Forms an RuvA(8)-RuvB(12)-Holliday junction (HJ) complex. HJ DNA is sandwiched between 2 RuvA tetramers; dsDNA enters through RuvA and exits via RuvB. An RuvB hexamer assembles on each DNA strand where it exits the tetramer. Each RuvB hexamer is contacted by two RuvA subunits (via domain III) on 2 adjacent RuvB subunits; this complex drives branch migration. In the full resolvosome a probable DNA-RuvA(4)-RuvB(12)-RuvC(2) complex forms which resolves the HJ.

The protein resides in the cytoplasm. Functionally, the RuvA-RuvB-RuvC complex processes Holliday junction (HJ) DNA during genetic recombination and DNA repair, while the RuvA-RuvB complex plays an important role in the rescue of blocked DNA replication forks via replication fork reversal (RFR). RuvA specifically binds to HJ cruciform DNA, conferring on it an open structure. The RuvB hexamer acts as an ATP-dependent pump, pulling dsDNA into and through the RuvAB complex. HJ branch migration allows RuvC to scan DNA until it finds its consensus sequence, where it cleaves and resolves the cruciform DNA. The polypeptide is Holliday junction branch migration complex subunit RuvA (Haemophilus ducreyi (strain 35000HP / ATCC 700724)).